The chain runs to 673 residues: MSTHSNDYFSASSGMVSETSSEVSSINSSQPVSFSKASIAAPVPCSDLHSTKSNDASRKLSISRTLTNRLNDIKKAVDDDNLQTEENSADVNKILESRFDVADAIRLQHNESVQSKLNIPVTHTTTAGASLSAPSSSAFSASSIQNDTTEHKASMDSKLMRNRLYPASTKHSGKDLEAQGITEFEPDEPTVKKVFTNKSTGQLELPPDGGYGWVVTFCVFLTMFSTWGCNASFGVDLAYYLNHDTYPGASKYDYALIAGLTVFLGQLLSPLVMALMRIIGLRTTMLFGDAVMLAAYLLASFTTKLWQLYVTQGFMVGCSISLIFVPATTVLPGWFLKKRAVAMGVSLLGTGAGGVVYGLATNKMLSDFGNTRWCLRIIGISCSISVLVAIALLKERNPTPAIGLKSPRAMFEQLKAMFSLKVITKPFVVLIALWFMFALFAYNMMVFTLSSYAISKGLSSHDASTLTAILNGSQSIGRPLMGLAGDKFGRANVTIVLTTLLTIYMFAFWIPAHTFVQLIFFSILVGSCVGVANVMNTVLIADMVKPEEFLPAWAFVNYCGAPFLLVCEVIAQALTVEKDKSNPYLHAQIFCGCCFIAALILISILREYSIRMKLTERQAMTNEKLKEWKASEYDTDSADEDWGKLKERKTKYDLLLGPGIKKYFLRMVYPMKV.

The Cytoplasmic segment spans residues Met-1 to Asp-208. 3 positions are modified to phosphoserine: Ser-57, Ser-112, and Ser-172. The chain crosses the membrane as a helical span at residues Gly-209–Cys-229. N-linked (GlcNAc...) asparagine glycosylation occurs at Asn-230. Topologically, residues Asn-230 to Ala-255 are lumenal. The chain crosses the membrane as a helical span at residues Leu-256–Met-276. A topological domain (cytoplasmic) is located at residue Arg-277. A helical transmembrane segment spans residues Ile-278–Leu-298. Residues Ala-299 to Met-315 are Lumenal-facing. Residues Val-316–Leu-336 form a helical membrane-spanning segment. Over Lys-337–Arg-339 the chain is Cytoplasmic. Residues Ala-340–Ala-360 traverse the membrane as a helical segment. At Thr-361–Arg-372 the chain is on the lumenal side. Residues Trp-373–Leu-393 form a helical membrane-spanning segment. The Cytoplasmic segment spans residues Lys-394–Pro-426. A helical transmembrane segment spans residues Phe-427 to Phe-447. Topologically, residues Thr-448–Tyr-504 are lumenal. Residues Asn-471 and Asn-492 are each glycosylated (N-linked (GlcNAc...) asparagine). Residues Met-505–Val-525 traverse the membrane as a helical segment. Topologically, residues Gly-526–Phe-549 are cytoplasmic. A helical membrane pass occupies residues Leu-550–Ile-570. The Lumenal segment spans residues Ala-571–Tyr-584. The chain crosses the membrane as a helical span at residues Leu-585–Leu-605. The Cytoplasmic portion of the chain corresponds to Arg-606–Val-673. The residue at position 637 (Ser-637) is a Phosphoserine.

This sequence belongs to the major facilitator superfamily. Monocarboxylate porter (TC 2.A.1.13) family.

The protein resides in the endoplasmic reticulum membrane. This is an uncharacterized protein from Saccharomyces cerevisiae (strain ATCC 204508 / S288c) (Baker's yeast).